A 617-amino-acid chain; its full sequence is Dihydroxy-acid dehydratase (617 aa).

D81 contacts Mg(2+). [2Fe-2S] cluster is bound at residue C122. The Mg(2+) site is built by D123 and K124. K124 is modified (N6-carboxylysine). C195 lines the [2Fe-2S] cluster pocket. E491 contacts Mg(2+). S517 (proton acceptor) is an active-site residue.

The protein belongs to the IlvD/Edd family. In terms of assembly, homodimer. [2Fe-2S] cluster serves as cofactor. Requires Mg(2+) as cofactor.

It carries out the reaction (2R)-2,3-dihydroxy-3-methylbutanoate = 3-methyl-2-oxobutanoate + H2O. The catalysed reaction is (2R,3R)-2,3-dihydroxy-3-methylpentanoate = (S)-3-methyl-2-oxopentanoate + H2O. The protein operates within amino-acid biosynthesis; L-isoleucine biosynthesis; L-isoleucine from 2-oxobutanoate: step 3/4. It participates in amino-acid biosynthesis; L-valine biosynthesis; L-valine from pyruvate: step 3/4. Its function is as follows. Functions in the biosynthesis of branched-chain amino acids. Catalyzes the dehydration of (2R,3R)-2,3-dihydroxy-3-methylpentanoate (2,3-dihydroxy-3-methylvalerate) into 2-oxo-3-methylpentanoate (2-oxo-3-methylvalerate) and of (2R)-2,3-dihydroxy-3-methylbutanoate (2,3-dihydroxyisovalerate) into 2-oxo-3-methylbutanoate (2-oxoisovalerate), the penultimate precursor to L-isoleucine and L-valine, respectively. The chain is Dihydroxy-acid dehydratase from Hydrogenovibrio crunogenus (strain DSM 25203 / XCL-2) (Thiomicrospira crunogena).